We begin with the raw amino-acid sequence, 59 residues long: MNFNKLFVIVLLAALAFFGQAEAGGLKKFGKKLEGVGKRVFKASEKALPVVTGFKALGK.

Positions 1-23 (MNFNKLFVIVLLAALAFFGQAEA) are cleaved as a signal peptide. Leucine 57 is subject to Leucine amide.

Belongs to the cecropin family.

It localises to the secreted. Cecropins have lytic and antibacterial activity against several Gram-positive and Gram-negative bacteria. In Culex pipiens pipiens (Northern house mosquito), this protein is Cecropin-A (CECA).